Consider the following 529-residue polypeptide: ATP synthase F(1) complex catalytic subunit beta, mitochondrial (529 aa).

The N-terminal 46 residues, 1–46 (MLSLVGRVASASASGALRGLSPSAALPQAQLLLRAAPAGVHPARDY), are a transit peptide targeting the mitochondrion. Ser-106 carries an O-linked (GlcNAc) serine glycan. 3 positions are modified to N6-acetyllysine; alternate: Lys-124, Lys-133, and Lys-161. N6-succinyllysine; alternate is present on residues Lys-124, Lys-133, and Lys-161. At Lys-198 the chain carries N6-acetyllysine. ADP-binding residues include Gly-209, Val-210, Gly-211, Lys-212, Thr-213, and Val-214. Gly-209 is an ATP binding site. Gly-209, Val-210, Gly-211, Lys-212, and Thr-213 together coordinate phosphate. Positions 211, 212, 213, and 214 each coordinate ATP. A Mg(2+)-binding site is contributed by Thr-213. Glu-238 serves as a coordination point for Mg(2+). Residue Arg-239 participates in ATP binding. Residues Lys-259 and Lys-264 each carry the N6-acetyllysine; alternate modification. N6-succinyllysine; alternate is present on residues Lys-259 and Lys-264. A Phosphothreonine modification is found at Thr-312. Lys-426 is subject to N6-acetyllysine. At Ser-433 the chain carries Phosphoserine. 2 positions are modified to N6-acetyllysine: Lys-480 and Lys-485. Position 522 is an N6-acetyllysine; alternate (Lys-522). At Lys-522 the chain carries N6-succinyllysine; alternate. Phosphoserine is present on Ser-529.

It belongs to the ATPase alpha/beta chains family. As to quaternary structure, homotrimer. Component of the ATP synthase complex composed at least of ATP5F1A/subunit alpha, ATP5F1B/subunit beta, ATP5MC1/subunit c (homooctomer), MT-ATP6/subunit a, MT-ATP8/subunit 8, ATP5ME/subunit e, ATP5MF/subunit f, ATP5MG/subunit g, ATP5MK/subunit k, ATP5MJ/subunit j, ATP5F1C/subunit gamma, ATP5F1D/subunit delta, ATP5F1E/subunit epsilon, ATP5PF/subunit F6, ATP5PB/subunit b, ATP5PD/subunit d, ATP5PO/subunit OSCP. ATP synthase complex consists of a soluble F(1) head domain (subunits alpha(3) and beta(3)) - the catalytic core - and a membrane F(0) domain - the membrane proton channel (subunits c, a, 8, e, f, g, k and j). These two domains are linked by a central stalk (subunits gamma, delta, and epsilon) rotating inside the F1 region and a stationary peripheral stalk (subunits F6, b, d, and OSCP). Interacts with PPIF. Interacts with BCL2L1 isoform BCL-X(L); the interaction mediates the association of BCL2L1 isoform BCL-X(L) with the mitochondrial membrane F(1)F(0) ATP synthase and enhances neurons metabolic efficiency. Interacts with CLN5 and PPT1. Interacts with S100A1; this interaction increases F1-ATPase activity. Interacts with MTLN. Interacts with TTC5/STRAP; the interaction results in decreased mitochondrial ATP production. Acetylation of Lys-133 is observed in liver mitochondria from fasted mice but not from fed mice.

It is found in the mitochondrion inner membrane. The catalysed reaction is ATP + H2O + 4 H(+)(in) = ADP + phosphate + 5 H(+)(out). Functionally, catalytic subunit beta, of the mitochondrial membrane ATP synthase complex (F(1)F(0) ATP synthase or Complex V) that produces ATP from ADP in the presence of a proton gradient across the membrane which is generated by electron transport complexes of the respiratory chain. ATP synthase complex consist of a soluble F(1) head domain - the catalytic core - and a membrane F(1) domain - the membrane proton channel. These two domains are linked by a central stalk rotating inside the F(1) region and a stationary peripheral stalk. During catalysis, ATP synthesis in the catalytic domain of F(1) is coupled via a rotary mechanism of the central stalk subunits to proton translocation. In vivo, can only synthesize ATP although its ATP hydrolase activity can be activated artificially in vitro. With the subunit alpha (ATP5F1A), forms the catalytic core in the F(1) domain. The chain is ATP synthase F(1) complex catalytic subunit beta, mitochondrial from Mus musculus (Mouse).